We begin with the raw amino-acid sequence, 750 residues long: Methylmalonyl-CoA mutase, mitochondrial (750 aa).

The transit peptide at 1–32 (MLRVKNQLFLLSPHYLKQVKESSGSRLIRQRF) directs the protein to the mitochondrion. Gln-50 provides a ligand contact to malonyl-CoA. Lys-89 bears the N6-acetyllysine mark. Residues 96–99 (YPTM) and 106–110 (TIRQY) contribute to the malonyl-CoA site. N6-acetyllysine is present on Lys-212. Malonyl-CoA contacts are provided by residues 216-218 (TIQ), Arg-228, Lys-255, His-265, and 304-306 (RLS). Lys-335 carries the post-translational modification N6-acetyllysine. Position 343 is an N6-succinyllysine (Lys-343). At Ser-481 the chain carries Phosphoserine. The residue at position 595 (Lys-595) is an N6-succinyllysine. Lys-602 carries the N6-acetyllysine modification. Residues 614 to 746 (RPRLLVAKMG…DDIEKCLEKK (133 aa)) enclose the B12-binding domain. His-627 provides a ligand contact to adenosylcob(III)alamin.

The protein belongs to the methylmalonyl-CoA mutase family. As to quaternary structure, homodimer. Interacts (the apoenzyme form) with MMAA; the interaction is GTP dependent. The cofactor is adenosylcob(III)alamin.

It is found in the mitochondrion matrix. Its subcellular location is the mitochondrion. The protein resides in the cytoplasm. It carries out the reaction (R)-methylmalonyl-CoA = succinyl-CoA. Its activity is regulated as follows. Inhibited by itaconyl-CoA, a metabolite that inactivates the coenzyme B12 cofactor. In terms of biological role, catalyzes the reversible isomerization of methylmalonyl-CoA (MMCoA) (generated from branched-chain amino acid metabolism and degradation of dietary odd chain fatty acids and cholesterol) to succinyl-CoA (3-carboxypropionyl-CoA), a key intermediate of the tricarboxylic acid cycle. The sequence is that of Methylmalonyl-CoA mutase, mitochondrial (MMUT) from Macaca fascicularis (Crab-eating macaque).